We begin with the raw amino-acid sequence, 104 residues long: QACSETSDCLEGLECSGNQCLIPYDGDDSCVTGFDCVIGVGCVYDNGNPGRCIRDHRCKGDKKDICTNPATECDEDKVCGYKEGETCYGPCRKGLTCRNTRCQK.

Post-translationally, contains 8 disulfide bonds. As to expression, expressed by the venom duct.

The protein resides in the secreted. Its function is as follows. Acts as a neurotoxin by inhibiting an ion channel. In Iotyrris olangoensis (Sea snail), this protein is Turripeptide OL55.